We begin with the raw amino-acid sequence, 343 residues long: ATP phosphoribosyltransferase regulatory subunit (343 aa).

The segment at arginine 324–arginine 343 is disordered. Residues glycine 327–arginine 343 are compositionally biased toward basic residues.

It belongs to the class-II aminoacyl-tRNA synthetase family. HisZ subfamily. In terms of assembly, heteromultimer composed of HisG and HisZ subunits.

It localises to the cytoplasm. Its pathway is amino-acid biosynthesis; L-histidine biosynthesis; L-histidine from 5-phospho-alpha-D-ribose 1-diphosphate: step 1/9. Its function is as follows. Required for the first step of histidine biosynthesis. May allow the feedback regulation of ATP phosphoribosyltransferase activity by histidine. This is ATP phosphoribosyltransferase regulatory subunit from Anaeromyxobacter sp. (strain Fw109-5).